We begin with the raw amino-acid sequence, 338 residues long: ATP synthase subunit a (338 aa).

A helical membrane pass occupies residues 15 to 35 (IAVLVMPLLLGFGAPIYAAAE). Positions 45-66 (AAAVHTDEAHGEAGEHAEGGHG) are disordered. Basic and acidic residues predominate over residues 49–65 (HTDEAHGEAGEHAEGGH). Transmembrane regions (helical) follow at residues 109–129 (HVVF…YVGN), 174–194 (LLTV…PYGA), 199–219 (NINV…VSAI), 238–258 (ALWI…PFAL), 262–282 (LFAN…ISFI), 287–307 (IVAI…EIFV), and 308–328 (SFLQ…LGSA).

The protein belongs to the ATPase A chain family. F-type ATPases have 2 components, CF(1) - the catalytic core - and CF(0) - the membrane proton channel. CF(1) has five subunits: alpha(3), beta(3), gamma(1), delta(1), epsilon(1). CF(0) has four main subunits: a, b, b' and c.

Its subcellular location is the cell inner membrane. Functionally, key component of the proton channel; it plays a direct role in the translocation of protons across the membrane. The chain is ATP synthase subunit a from Chlorobium phaeobacteroides (strain BS1).